A 424-amino-acid chain; its full sequence is Histone-binding protein RBBP7 (424 aa).

7 WD repeats span residues 47–121 (QWLP…KINH), 127–172 (RARY…LRLR), 180–216 (GLSWNSNLKGHLLSASDDHTVCLWDISAGPKEGKIVD), 227–268 (VVED…HSVD), 274–311 (VNCLSFNPYSEFILATGSADKTVALWDLRNLKLKLHSF), 317–368 (EIFQ…LFIH), and 375–402 (ISDFSWNPNEPWVICSVSEDNIMQIWQM). The tract at residues 359 to 404 (DGPPELLFIHGGHTAKISDFSWNPNEPWVICSVSEDNIMQIWQMAE) is interaction with HAT1.

This sequence belongs to the WD repeat RBAP46/RBAP48/MSI1 family. In terms of assembly, binds directly to helix 1 of the histone fold of histone H4, a region that is not accessible when H4 is in chromatin. Also interacts with histone H2B and HAT1.

Its subcellular location is the nucleus. Functionally, core histone-binding subunit that may target chromatin remodeling factors, histone acetyltransferases and histone deacetylases to their histone substrates in a manner that is regulated by nucleosomal DNA. Component of several complexes which regulate chromatin metabolism. The protein is Histone-binding protein RBBP7 (RBBP7) of Gallus gallus (Chicken).